The chain runs to 211 residues: Methylthioribulose-1-phosphate dehydratase (211 aa).

Histidine 101 and histidine 103 together coordinate Zn(2+).

This sequence belongs to the aldolase class II family. MtnB subfamily. It depends on Zn(2+) as a cofactor.

The enzyme catalyses 5-(methylsulfanyl)-D-ribulose 1-phosphate = 5-methylsulfanyl-2,3-dioxopentyl phosphate + H2O. Its pathway is amino-acid biosynthesis; L-methionine biosynthesis via salvage pathway; L-methionine from S-methyl-5-thio-alpha-D-ribose 1-phosphate: step 2/6. In terms of biological role, catalyzes the dehydration of methylthioribulose-1-phosphate (MTRu-1-P) into 2,3-diketo-5-methylthiopentyl-1-phosphate (DK-MTP-1-P). The chain is Methylthioribulose-1-phosphate dehydratase from Alcanivorax borkumensis (strain ATCC 700651 / DSM 11573 / NCIMB 13689 / SK2).